The sequence spans 165 residues: MAKVEQNEGLVEKLVAVDRVAKVVKGGRIFSFTALTVVGDGNGRVGFGRGKAREVPAAISKALEAARRNMITVDLAGTTLQHPVNARHGASRVYMQPASEGTGVIAGGAMRAVLEAAGVHNVLAKCYGSTNAANVVNATFKGLRDMTSPEKVAAKRGKSVEEIQG.

In terms of domain architecture, S5 DRBM spans 10–73 (LVEKLVAVDR…EAARRNMITV (64 aa)).

This sequence belongs to the universal ribosomal protein uS5 family. Part of the 30S ribosomal subunit. Contacts proteins S4 and S8.

In terms of biological role, with S4 and S12 plays an important role in translational accuracy. Its function is as follows. Located at the back of the 30S subunit body where it stabilizes the conformation of the head with respect to the body. This chain is Small ribosomal subunit protein uS5, found in Acinetobacter baumannii (strain AB307-0294).